The chain runs to 970 residues: Cullin-4B (970 aa).

Over residues 1 to 14 (MSRSTRSKERREND) the composition is skewed to basic and acidic residues. Disordered stretches follow at residues 1–157 (MSRS…SFCL) and 189–211 (AEESSSSSSSSSPTAATSQQQQQ). At Thr15 the chain carries Phosphothreonine. Ser17 carries the post-translational modification Phosphoserine. The segment covering 36-57 (PPRPPYPPLLPPVFPPPTPPPQ) has biased composition (pro residues). The segment covering 78–98 (SGFSSPNPSAASAAAQEVRSA) has biased composition (low complexity). Polar residues predominate over residues 99 to 109 (TDGNTSTTPPT). Thr106 bears the Phosphothreonine mark. Ser110 is subject to Phosphoserine. Residues 112–115 (KKRK) carry the Nuclear localization signal motif. Residues 117 to 126 (NSSSSSSNSS) show a composition bias toward low complexity. The span at 146 to 155 (DSASPSTSSF) shows a compositional bias: polar residues. Residues Ser154 and Ser200 each carry the phosphoserine modification. Residues 192–211 (SSSSSSSSSPTAATSQQQQQ) show a composition bias toward low complexity. At Thr202 the chain carries Phosphothreonine. Lys247 participates in a covalent cross-link: Glycyl lysine isopeptide (Lys-Gly) (interchain with G-Cter in ubiquitin). Position 250 is a phosphoserine (Ser250). The region spanning 902 to 962 (DRQYQIDAAI…RDYMERDKEN (61 aa)) is the Cullin neddylation domain. Residue Lys916 forms a Glycyl lysine isopeptide (Lys-Gly) (interchain with G-Cter in NEDD8) linkage.

The protein belongs to the cullin family. As to quaternary structure, component of multiple DCX (DDB1-CUL4-X-box) E3 ubiquitin-protein ligase complexes that seem to be formed of DDB1, CUL4A or CUL4B, RBX1 and a variable substrate recognition component which seems to belong to a protein family described as DCAF (Ddb1- and Cul4-associated factor) or CDW (CUL4-DDB1-associated WD40-repeat) proteins. Component of the DCX(DTL) complex with the putative substrate recognition component DTL. Component of the DCX(DDB2) complex with the putative substrate recognition component DDB2. Component of DCX complexes part of the DesCEND (destruction via C-end degrons) pathway, which contain either TRPC4AP or DCAF12 as substrate-recognition component. Component of the DCX(AMBRA1) complex with the substrate recognition component AMBRA1. Part of a complex with RBX1 and TIP120A/CAND1. Component of the DCX(WDR77) complex, composed of Cul4b, Ddb1, Wdr77 and Rbx1. Interacts with RBX1, GRWD1, MLST8, SMU1, TLE2, TLE3, DCAF1, DDA1, DCAF6, DCAF17, DDB2, DCAF8, TIP120A/CAND1 and TMEM113. Interacts with cyclin E (CCNE1 or CCNE2) and with importins alpha-1 (KPNA2), alpha-3 (KPNA4), alpha-5 (KPNA1) and beta-1 (KPNB1). May interact with WDR26, WDR51B, SNRNP40, WDR61, WDR76 and WDR5. Interacts (unneddylated form) with DCUN1D1, DCUN1D2, DCUN1D3, DCUN1D4 and DCUN1D5; these interactions promote the cullin neddylation. In terms of processing, neddylated. Deneddylated via its interaction with the COP9 signalosome (CSN) complex. In terms of tissue distribution, expressed in oocytes (at protein level).

The protein resides in the cytoplasm. Its subcellular location is the nucleus. Its pathway is protein modification; protein ubiquitination. Its function is as follows. Core component of multiple cullin-RING-based E3 ubiquitin-protein ligase complexes which mediate the ubiquitination and subsequent proteasomal degradation of target proteins. The functional specificity of the E3 ubiquitin-protein ligase complex depends on the variable substrate recognition subunit. CUL4B may act within the complex as a scaffold protein, contributing to catalysis through positioning of the substrate and the ubiquitin-conjugating enzyme. Plays a role as part of the E3 ubiquitin-protein ligase complex in polyubiquitination of CDT1, histone H2A, histone H3 and histone H4 in response to radiation-induced DNA damage. Targeted to UV damaged chromatin by DDB2 and may be important for DNA repair and DNA replication. A number of DCX complexes (containing either TRPC4AP or DCAF12 as substrate-recognition component) are part of the DesCEND (destruction via C-end degrons) pathway, which recognizes a C-degron located at the extreme C terminus of target proteins, leading to their ubiquitination and degradation. The DCX(AMBRA1) complex is a master regulator of the transition from G1 to S cell phase by mediating ubiquitination of phosphorylated cyclin-D (CCND1, CCND2 and CCND3). The DCX(AMBRA1) complex also acts as a regulator of Cul5-RING (CRL5) E3 ubiquitin-protein ligase complexes by mediating ubiquitination and degradation of Elongin-C (ELOC) component of CRL5 complexes. Required for ubiquitination of cyclin E (CCNE1 or CCNE2), and consequently, normal G1 cell cycle progression. Component of the DCX(WDR77) complex, which mediates ubiquitination and degradation of Irgm1 in intestinal cells. Regulates the mammalian target-of-rapamycin (mTOR) pathway involved in control of cell growth, size and metabolism. Specific CUL4B regulation of the mTORC1-mediated pathway is dependent upon 26S proteasome function and requires interaction between CUL4B and MLST8. With CUL4A, contributes to ribosome biogenesis. The protein is Cullin-4B of Mus musculus (Mouse).